The following is a 1228-amino-acid chain: MAVTKRAGRRAQGGTQPAKGAQGVKKATFESGKKREVGVSDLTLLSKVSEEAINENLKKRFENGTIYTYIGHVLISVNPFRDLGIYTDAVLESYKGKNRLEVPPHVFSIAESMYYNMKSYSENQCVIISGESGAGKTEASKRIMQYIASASGGSSSNIQKIKDMVLATNPLLEAFGCAKTLRNDNSSRHGKYLEIQFNNQAEPVGANITNYLLEKGRVVGQIRNERNFHIFYQFAKAASENYRSTFGIQPPEAYTYTSASGCTSVNGINDEAEFKETLAAMNLIGLTQAEQDNLFKLLAAILWIGNMSFVEDKDGNAAIADVSVPNFVAYLLEVDAESVVKAVTQRIMETSRGGRRGSVYEVALNIAQATSVRDALAKGIYNNLFDWIVERVNQSLRAPQDAARTIGILDIYGFEIFESNSFEQICINYVNEKLQQIFIQLTLKTEQDEYVREQIAWTPINYFNNKIVCDLIEEKRPPGIFAALNDACATAHADPNAADENFIQRMSMVGQNPHFEQRQRKFVIKHYAGDVTYDVKGITDKNKDQLLKDILILLQKSGNPFLVSLFPDPVNTDNRRRPPTASDKIKKSANDLVTTLSAAQPSYIRTIKPNQNRSPTEYDEKAVLHQVKYLGLQENVRIRRAGFAYRQTFEKFVERFMLLSGKTSYAGDYIWQGSAYDATLCILRDAGIPQTEYQMGTTKVFIKTPETLFALEHMRDMWWHNMAARIQRAWRRYLAYKTECAIKIQRFWRLKRGLDGLKEIQFRDSGHKLLGGRKERRTYSLIGYRRFQGDYLGCNNGSGFGDFLMKQIGVTDKVFFSCRGQLQQSRLGRSSVRVPRTFILTKNNFYVVAQQIHQKQLVVTNEYTIPVRNITHMSMSNLRDDWFCLNQASSPYGDQLMWCVFKTELAVQLRVVKPGVDIRIGPQIDYFKKQGKKASVKFQKTTTLQTKFDMYKSGSVQVPPGAPPNSVSKETPRGRAKGSRGGAPSRPAARGNAAHTPTPGAAALGYQQHQPGSAQPASPRARKAPPPAPNSRGNGHAESAQPQAYNNLQPHYQSLVNPRSGQGQQQQQHHQAYQQPTAAQPAATSYSPAPAKAAPPPPPPAPPAAPAAPAEPTYKALYDYVANGLNQLSISAGEQVLISVKEDQGWWLAKRMDGSEEGWTPAAYLEEVQGGAAAPPPAAPTAGGASAGASLAEALKQKQQSNQTLGAGIADAIKARTGRPADDDDDDW.

A disordered region spans residues 1–27 (MAVTKRAGRRAQGGTQPAKGAQGVKKA). Residues 37-716 (VGVSDLTLLS…TLFALEHMRD (680 aa)) enclose the Myosin motor domain. 130 to 137 (GESGAGKT) lines the ATP pocket. S358 bears the Phosphoserine mark. The tract at residues 405 to 487 (TIGILDIYGF…PGIFAALNDA (83 aa)) is actin-binding. 2 IQ domains span residues 720 to 740 (HNMA…KTEC) and 741 to 768 (AIKI…SGHK). In terms of domain architecture, TH1 spans 776–962 (RRTYSLIGYR…SGSVQVPPGA (187 aa)). 3 disordered regions span residues 953–1040 (SGSV…AESA), 1053–1109 (QSLV…PAAP), and 1169–1228 (QGGA…DDDW). The segment covering 1053–1063 (QSLVNPRSGQG) has biased composition (polar residues). The span at 1064–1092 (QQQQQHHQAYQQPTAAQPAATSYSPAPAK) shows a compositional bias: low complexity. Residues 1093 to 1106 (AAPPPPPPAPPAAP) are compositionally biased toward pro residues. Residues 1109–1170 (PAEPTYKALY…PAAYLEEVQG (62 aa)) enclose the SH3 domain. Residues 1180-1194 (PTAGGASAGASLAEA) are compositionally biased toward low complexity.

The protein belongs to the TRAFAC class myosin-kinesin ATPase superfamily. Myosin family. In terms of processing, phosphorylation of the TEDS site (Ser-358) is required for the polarization of the actin cytoskeleton. Phosphorylation probably activates the myosin-I ATPase activity.

The protein localises to the cytoplasm. It localises to the cytoskeleton. It is found in the actin patch. Type-I myosin implicated in the organization of the actin cytoskeleton. Required for proper actin cytoskeleton polarization. At the cell cortex, assembles in patch-like structures together with proteins from the actin-polymerizing machinery and promotes actin assembly. Functions as actin nucleation-promoting factor (NPF) for the Arp2/3 complex. This chain is Myosin-1 (MYO1), found in Yarrowia lipolytica (strain CLIB 122 / E 150) (Yeast).